Reading from the N-terminus, the 208-residue chain is CASP-like protein 1D1 (208 aa).

Positions 1-36 (MSSVDTEKPAPPPLETEAPPPPPPPPPPPPPPPPPP) are disordered. Residues 1–41 (MSSVDTEKPAPPPLETEAPPPPPPPPPPPPPPPPPPAGYSA) lie on the Cytoplasmic side of the membrane. Over residues 9–36 (PAPPPLETEAPPPPPPPPPPPPPPPPPP) the composition is skewed to pro residues. A helical transmembrane segment spans residues 42 to 62 (LDVVLRILLLGSAVASVVVMV). Over 63 to 89 (TSVQTKLIAVAGVPVLVSNKAKFQNSP) the chain is Extracellular. A helical membrane pass occupies residues 90–110 (AFIYFVAALSVVGLYSIITTL). The Cytoplasmic portion of the chain corresponds to 111 to 133 (ASFIFISKPSCSTKTILHLAIWD). A helical transmembrane segment spans residues 134–154 (VLMLGLAASATGTAGGVAYVG). Topologically, residues 155 to 180 (LKGNSHVGWNKVCNTYDKFCRHVGGS) are extracellular. Residues 181–201 (IAVALFASILLVLLVWLSLFT) traverse the membrane as a helical segment. Over 202 to 208 (LYSRIRK) the chain is Cytoplasmic.

Belongs to the Casparian strip membrane proteins (CASP) family. As to quaternary structure, homodimer and heterodimers.

The protein resides in the cell membrane. The chain is CASP-like protein 1D1 from Vitis vinifera (Grape).